The sequence spans 626 residues: Chaperone protein HtpG (626 aa).

Positions Met-1–Arg-341 are a; substrate-binding. Positions Glu-342–Lys-552 are b. A disordered region spans residues Asp-490–Asn-509. Positions Lys-498–Asn-509 are enriched in basic and acidic residues. The c stretch occupies residues Val-553–Lys-626.

The protein belongs to the heat shock protein 90 family. In terms of assembly, homodimer.

Its subcellular location is the cytoplasm. Molecular chaperone. Has ATPase activity. This Clostridium botulinum (strain Loch Maree / Type A3) protein is Chaperone protein HtpG.